The primary structure comprises 66 residues: Cold shock-like protein CspD (66 aa).

Residues 4–63 (GKVKWFNGEKGFGFIEVEGGEDVFVHFSAIQGDGFKTLEEGQEVSFEIVDGNRGPQAANV) form the CSD domain.

In terms of assembly, homodimer.

The protein localises to the cytoplasm. In Bacillus cereus, this protein is Cold shock-like protein CspD (cspD).